Reading from the N-terminus, the 528-residue chain is GMP synthase [glutamine-hydrolyzing] (528 aa).

The 192-residue stretch at serine 13–aspartate 204 folds into the Glutamine amidotransferase type-1 domain. The active-site Nucleophile is cysteine 90. Residues histidine 178 and glutamate 180 contribute to the active site. The 199-residue stretch at tryptophan 205–arginine 403 folds into the GMPS ATP-PPase domain. Serine 232–serine 238 serves as a coordination point for ATP.

In terms of assembly, homodimer.

It carries out the reaction XMP + L-glutamine + ATP + H2O = GMP + L-glutamate + AMP + diphosphate + 2 H(+). Its pathway is purine metabolism; GMP biosynthesis; GMP from XMP (L-Gln route): step 1/1. Its function is as follows. Catalyzes the synthesis of GMP from XMP. This is GMP synthase [glutamine-hydrolyzing] from Prochlorococcus marinus (strain MIT 9312).